The following is a 513-amino-acid chain: Maturase K (513 aa).

Belongs to the intron maturase 2 family. MatK subfamily.

The protein resides in the plastid. The protein localises to the chloroplast. Functionally, usually encoded in the trnK tRNA gene intron. Probably assists in splicing its own and other chloroplast group II introns. The sequence is that of Maturase K from Phragmites australis (Common reed).